The primary structure comprises 196 residues: DNA replication complex GINS protein PSF1 (196 aa).

This sequence belongs to the GINS1/PSF1 family. Component of the GINS complex which is a heterotetramer of gins1/psf1, gins2/psf2, gins3/psf3 and gins4/sld5. Component of the CMG helicase complex, composed of the mcm2-7 complex, the GINS complex and cdc45.

The protein resides in the nucleus. It localises to the chromosome. In terms of biological role, required for correct functioning of the GINS complex, a complex that plays an essential role in the initiation of DNA replication, and progression of DNA replication forks. GINS complex is a core component of CDC45-MCM-GINS (CMG) helicase, the molecular machine that unwinds template DNA during replication, and around which the replisome is built. This Xenopus laevis (African clawed frog) protein is DNA replication complex GINS protein PSF1.